A 511-amino-acid chain; its full sequence is GMP synthase [glutamine-hydrolyzing] (511 aa).

The region spanning 5–195 is the Glutamine amidotransferase type-1 domain; that stretch reads DILVLDFGSQ…AKYACNCESI (191 aa). Residue cysteine 82 is the Nucleophile of the active site. Catalysis depends on residues histidine 169 and glutamate 171. Residues 196–386 form the GMPS ATP-PPase domain; that stretch reads WNMGSFAKTQ…LGLSKEVVYR (191 aa). 223–229 is a binding site for ATP; sequence SGGVDSS.

As to quaternary structure, homodimer.

It catalyses the reaction XMP + L-glutamine + ATP + H2O = GMP + L-glutamate + AMP + diphosphate + 2 H(+). It participates in purine metabolism; GMP biosynthesis; GMP from XMP (L-Gln route): step 1/1. Functionally, catalyzes the synthesis of GMP from XMP. The protein is GMP synthase [glutamine-hydrolyzing] (guaA) of Campylobacter jejuni subsp. jejuni serotype O:2 (strain ATCC 700819 / NCTC 11168).